Reading from the N-terminus, the 157-residue chain is uncharacterized protein (157 aa).

Residues 1-11 (MGDLEGQDRPD) are compositionally biased toward basic and acidic residues. Positions 1-22 (MGDLEGQDRPDPISTMVGPSGT) are disordered.

It localises to the mitochondrion. This is an uncharacterized protein from Arabidopsis thaliana (Mouse-ear cress).